We begin with the raw amino-acid sequence, 178 residues long: NAD(P)H-quinone oxidoreductase subunit J (178 aa).

The protein belongs to the complex I 30 kDa subunit family. In terms of assembly, NDH-1 can be composed of about 15 different subunits; different subcomplexes with different compositions have been identified which probably have different functions.

Its subcellular location is the cellular thylakoid membrane. It carries out the reaction a plastoquinone + NADH + (n+1) H(+)(in) = a plastoquinol + NAD(+) + n H(+)(out). The catalysed reaction is a plastoquinone + NADPH + (n+1) H(+)(in) = a plastoquinol + NADP(+) + n H(+)(out). Its function is as follows. NDH-1 shuttles electrons from an unknown electron donor, via FMN and iron-sulfur (Fe-S) centers, to quinones in the respiratory and/or the photosynthetic chain. The immediate electron acceptor for the enzyme in this species is believed to be plastoquinone. Couples the redox reaction to proton translocation, and thus conserves the redox energy in a proton gradient. Cyanobacterial NDH-1 also plays a role in inorganic carbon-concentration. The chain is NAD(P)H-quinone oxidoreductase subunit J from Crocosphaera subtropica (strain ATCC 51142 / BH68) (Cyanothece sp. (strain ATCC 51142)).